We begin with the raw amino-acid sequence, 161 residues long: Nucleotide-binding protein amb3630 (161 aa).

This sequence belongs to the YajQ family.

Functionally, nucleotide-binding protein. This chain is Nucleotide-binding protein amb3630, found in Paramagnetospirillum magneticum (strain ATCC 700264 / AMB-1) (Magnetospirillum magneticum).